The following is a 343-amino-acid chain: N-acetyl-gamma-glutamyl-phosphate reductase (343 aa).

Cys152 is an active-site residue.

The protein belongs to the NAGSA dehydrogenase family. Type 1 subfamily.

The protein localises to the cytoplasm. It carries out the reaction N-acetyl-L-glutamate 5-semialdehyde + phosphate + NADP(+) = N-acetyl-L-glutamyl 5-phosphate + NADPH + H(+). The protein operates within amino-acid biosynthesis; L-arginine biosynthesis; N(2)-acetyl-L-ornithine from L-glutamate: step 3/4. Its function is as follows. Catalyzes the NADPH-dependent reduction of N-acetyl-5-glutamyl phosphate to yield N-acetyl-L-glutamate 5-semialdehyde. The protein is N-acetyl-gamma-glutamyl-phosphate reductase of Methanopyrus kandleri (strain AV19 / DSM 6324 / JCM 9639 / NBRC 100938).